The following is a 668-amino-acid chain: Break repair meiotic recombinase recruitment factor 1 (668 aa).

5 disordered regions span residues 1–142 (MTKR…AQSP), 155–333 (LQEA…GCSS), 349–465 (LEER…GGQN), 482–521 (VLEH…HSAD), and 642–668 (LGGK…WREL). The segment covering 114–125 (TRKEEMKDEDRG) has biased composition (basic and acidic residues). A compositionally biased stretch (polar residues) spans 166 to 180 (QADSARPEQSSQSPV). Positions 208–251 (SQDHLSEQGADDSKPETDRVPGDGGQKEHLPSIDSEGEKPDRGA) are enriched in basic and acidic residues. Residues 279–296 (TPASAPTSGPAPGLGPAS) are compositionally biased toward low complexity. Over residues 305–316 (AQGSPDPQQTPS) the composition is skewed to polar residues. The residue at position 370 (serine 370) is a Phosphoserine. Over residues 391 to 400 (TGETTGESGE) the composition is skewed to low complexity.

In terms of assembly, interacts with HSF2BP (via N-terminus) and BRCA2; the interaction with HSF2BP is direct and allows the formation of a ternary complex. The complex BRME1:HSF2BP:BRCA2 interacts with SPATA22, MEIOB and RAD51.

It localises to the chromosome. Functionally, meiotic recombination factor component of recombination bridges involved in meiotic double-strand break repair. Modulates the localization of recombinases DMC1:RAD51 to meiotic double-strand break (DSB) sites through the interaction with and stabilization of the BRCA2:HSF2BP complex during meiotic recombination. Indispensable for the DSB repair, homologous synapsis, and crossover formation that are needed for progression past metaphase I, is essential for spermatogenesis and male fertility. This is Break repair meiotic recombinase recruitment factor 1 from Homo sapiens (Human).